We begin with the raw amino-acid sequence, 101 residues long: Small ribosomal subunit protein uS14 (101 aa).

The protein belongs to the universal ribosomal protein uS14 family. In terms of assembly, part of the 30S ribosomal subunit. Contacts proteins S3 and S10.

Functionally, binds 16S rRNA, required for the assembly of 30S particles and may also be responsible for determining the conformation of the 16S rRNA at the A site. The chain is Small ribosomal subunit protein uS14 from Vibrio campbellii (strain ATCC BAA-1116).